The following is a 356-amino-acid chain: Arginine kinase Lit v 2.0101 (356 aa).

A Phosphagen kinase N-terminal domain is found at 9-91 (KLEAGFKKLE…FDPIIEDYHV (83 aa)). 64-68 (GVGIY) contacts L-arginine. The 238-residue stretch at 119-356 (FVISTRVRCG…LELIKIEKEM (238 aa)) folds into the Phosphagen kinase C-terminal domain. Residues 122–126 (STRVR) and histidine 185 each bind ATP. Glutamate 225 lines the L-arginine pocket. Arginine 229 serves as a coordination point for ATP. Residue cysteine 271 participates in L-arginine binding. Residues 280–284 (RASVH) and 309–314 (RGTRGE) each bind ATP. Glutamate 314 provides a ligand contact to L-arginine.

This sequence belongs to the ATP:guanido phosphotransferase family. Monomer. In terms of tissue distribution, muscle (at protein level).

It carries out the reaction L-arginine + ATP = N(omega)-phospho-L-arginine + ADP + H(+). It catalyses the reaction dTDP + ATP = dTTP + ADP. Functionally, catalyzes the reversible transfer of high energy ATP gamma-phosphate group to L-arginine. Has nucleoside diphosphate kinase-like activity toward dTDP. Binds and phosphorylates dTDP using ATP as a phosphate donor. Does not phosphorylate dADP, dCDP, dGDP, dTMP or thymidine. This chain is Arginine kinase Lit v 2.0101, found in Penaeus vannamei (Whiteleg shrimp).